The following is a 412-amino-acid chain: Tyrosine--tRNA ligase (412 aa).

Tyrosine 31 is an L-tyrosine binding site. The 'HIGH' region motif lies at 36–45 (PTAPSLHIGH). Residues tyrosine 162 and glutamine 166 each contribute to the L-tyrosine site. Residues 222–226 (KIGKT) carry the 'KMSKS' region motif. Lysine 225 is a binding site for ATP. The region spanning 345-411 (KRWLDIVVEL…GKRKKQVIDL (67 aa)) is the S4 RNA-binding domain.

This sequence belongs to the class-I aminoacyl-tRNA synthetase family. TyrS type 1 subfamily. Homodimer.

It localises to the cytoplasm. The enzyme catalyses tRNA(Tyr) + L-tyrosine + ATP = L-tyrosyl-tRNA(Tyr) + AMP + diphosphate + H(+). In terms of biological role, catalyzes the attachment of tyrosine to tRNA(Tyr) in a two-step reaction: tyrosine is first activated by ATP to form Tyr-AMP and then transferred to the acceptor end of tRNA(Tyr). This Chlamydia trachomatis serovar A (strain ATCC VR-571B / DSM 19440 / HAR-13) protein is Tyrosine--tRNA ligase.